A 115-amino-acid chain; its full sequence is Cell division topological specificity factor (115 aa).

The interval 89-115 (TGQIQLKEPKNQSEVDSPETEGKDQNS) is disordered.

The protein belongs to the MinE family.

Its function is as follows. Prevents the cell division inhibition by proteins MinC and MinD at internal division sites while permitting inhibition at polar sites. This ensures cell division at the proper site by restricting the formation of a division septum at the midpoint of the long axis of the cell. The polypeptide is Cell division topological specificity factor (Prochlorococcus marinus (strain NATL2A)).